The following is a 275-amino-acid chain: Adenylate kinase (275 aa).

Position 54 to 59 (54 to 59 (GAGKGT)) interacts with ATP. Positions 74 to 103 (ATGDMLRSQVAKKTPLGREAKKIMDQGGLV) are NMP. Residues Thr-75, Arg-80, 101-103 (GLV), 130-133 (GFPR), and Gln-137 contribute to the AMP site. Residues 171–208 (GRLVHPASGRSYHRVFNPPKAEMKDDITGEPLVSRSDD) are LID. ATP is bound by residues Arg-172 and 181-182 (SY). The AMP site is built by Arg-205 and Arg-216. Gln-244 is a binding site for ATP.

It belongs to the adenylate kinase family. AK2 subfamily. In terms of assembly, monomer.

Its subcellular location is the cytoplasm. The protein resides in the cytosol. It localises to the mitochondrion intermembrane space. The catalysed reaction is AMP + ATP = 2 ADP. In terms of biological role, catalyzes the reversible transfer of the terminal phosphate group between ATP and AMP. Plays an important role in cellular energy homeostasis and in adenine nucleotide metabolism. Adenylate kinase activity is critical for regulation of the phosphate utilization and the AMP de novo biosynthesis pathways. The chain is Adenylate kinase (adk1) from Sclerotinia sclerotiorum (strain ATCC 18683 / 1980 / Ss-1) (White mold).